Consider the following 549-residue polypeptide: Lipase 5 (549 aa).

Residues 1-15 (MKLALALSLIASVAA) form the signal peptide. A disulfide bridge connects residues cysteine 75 and cysteine 112. Residue serine 224 is the Acyl-ester intermediate of the active site. Cysteines 283 and 292 form a disulfide. Asparagine 329 is a glycosylation site (N-linked (GlcNAc...) asparagine). Glutamate 356 acts as the Charge relay system in catalysis. Residue asparagine 366 is glycosylated (N-linked (GlcNAc...) asparagine). Histidine 464 serves as the catalytic Charge relay system.

The protein belongs to the type-B carboxylesterase/lipase family.

The catalysed reaction is a triacylglycerol + H2O = a diacylglycerol + a fatty acid + H(+). This is Lipase 5 (LIP5) from Diutina rugosa (Yeast).